Reading from the N-terminus, the 473-residue chain is UDP-N-acetylmuramoylalanine--D-glutamate ligase (473 aa).

An ATP-binding site is contributed by 120–126 (GSNGKTT).

The protein belongs to the MurCDEF family.

The protein localises to the cytoplasm. It catalyses the reaction UDP-N-acetyl-alpha-D-muramoyl-L-alanine + D-glutamate + ATP = UDP-N-acetyl-alpha-D-muramoyl-L-alanyl-D-glutamate + ADP + phosphate + H(+). The protein operates within cell wall biogenesis; peptidoglycan biosynthesis. Functionally, cell wall formation. Catalyzes the addition of glutamate to the nucleotide precursor UDP-N-acetylmuramoyl-L-alanine (UMA). This Nitrosospira multiformis (strain ATCC 25196 / NCIMB 11849 / C 71) protein is UDP-N-acetylmuramoylalanine--D-glutamate ligase.